The primary structure comprises 537 residues: Leucine-rich repeat LGI family member 4 (537 aa).

Positions 1–19 (MGGAGILLLLLAGAGVVVA) are cleaved as a signal peptide. LRR repeat units follow at residues 53 to 74 (TLLS…SFLR), 77 to 98 (SLHL…AFAG), 101 to 122 (HLQY…ALRG), and 125 to 146 (SLTH…LFRG). Positions 158-208 (NPFQCDCRVLWLLQWMPTVNASVGTGACAGPASLSHMQLHHLDPKTFKCRA) constitute an LRRCT domain. An N-linked (GlcNAc...) asparagine glycan is attached at N177. EAR repeat units follow at residues 210–252 (ELSW…SWDY), 256–298 (RFRP…ARPS), 302–349 (RLAP…CRDG), 351–394 (GFYP…HWTG), 396–439 (RFER…RWDG), 441–483 (MFRL…RLEP), and 487–532 (LLEP…QHHE).

Can bind to ADAM11, ADAM22 and ADAM23. In terms of tissue distribution, widely expressed, with highest expression in brain.

It localises to the secreted. Its function is as follows. Component of Schwann cell signaling pathway(s) that controls axon segregation and myelin formation. The sequence is that of Leucine-rich repeat LGI family member 4 (LGI4) from Homo sapiens (Human).